A 61-amino-acid polypeptide reads, in one-letter code: Beta-defensin 133 (61 aa).

An N-terminal signal peptide occupies residues M1–C23. 2 disulfides stabilise this stretch: C31-C59 and C38-C52.

Belongs to the beta-defensin family.

It is found in the secreted. Its function is as follows. Has antibacterial activity. This chain is Beta-defensin 133 (DEFB133), found in Homo sapiens (Human).